The following is a 350-amino-acid chain: MERARRRGGGGSGGGRGRGGKNVGGPGLSKSRLYPQAQHSHYPHYSASATPNQSGGTSEIQELASKRVDIQKKRFYLDVKQSSRGRFLKIAEVWIGRGRQDNIRKSKLTLSLSVAAELKDCLGDFIEHYAHLGLKGHRQEHGQSKEQVSRRRQKHSAPSPPVSVGSEEHPHSVLKTDYIERDNRKYYLDLKENQRGRFLRIRQTMMRGTGMIGYFGHSLGQDQTIVLPAQGMIEFRDALVQLIEDYGEGDIEERRCGDDDPLELPEGTSFRVDNKRFYFDVGSNKYGIFLKVSEVRPPYRNTITVPFKAWTRFGENFIKYEEEMRKICNSHKEKRMDGRRASGEEQECLD.

Disordered regions lie at residues 1–59 (MERA…GTSE) and 136–172 (GHRQ…HPHS). The segment covering 9–27 (GGGSGGGRGRGGKNVGGPG) has biased composition (gly residues). A compositionally biased stretch (polar residues) spans 47 to 59 (ASATPNQSGGTSE). The DNA-binding element occupies 54-296 (SGGTSEIQEL…GIFLKVSEVR (243 aa)). A compositionally biased stretch (basic and acidic residues) spans 137–149 (HRQEHGQSKEQVS). A phosphoserine mark is found at serine 163, serine 166, and serine 342.

The protein belongs to the PUR DNA-binding protein family. In terms of tissue distribution, isoform 1 is expressed in testis. Isoform 2 is expressed in blastocyst and kidney.

The protein resides in the nucleus. This is Purine-rich element-binding protein gamma (Purg) from Mus musculus (Mouse).